The sequence spans 382 residues: Caspase-1-B (382 aa).

The propeptide occupies 1-98; it reads MTAQLNKVRK…HEHAPSPIQE (98 aa). Residues histidine 216 and cysteine 270 contribute to the active site. Positions 283-292 are excised as a propeptide; the sequence is DVAPAPLEDD.

Belongs to the peptidase C14A family. Heterotetramer that consists of two anti-parallel arranged heterodimers, each one formed by a 20 kDa (Caspase-1 subunit p20) and a 10 kDa (Caspase-1 subunit p10) subunit. As to quaternary structure, heterotetramer that consists of two anti-parallel arranged heterodimers, each one formed by a 20 kDa (Caspase-1 subunit p20) and a 10 kDa (Caspase-1 subunit p10) subunit. Can form a heterodimer with isoform epsilon which then has an inhibitory effect. The two subunits are derived from the precursor sequence by an autocatalytic mechanism.

The protein resides in the cytoplasm. Its subcellular location is the cell membrane. It carries out the reaction Strict requirement for an Asp residue at position P1 and has a preferred cleavage sequence of Tyr-Val-Ala-Asp-|-.. In terms of biological role, thiol protease involved in a variety of inflammatory processes by proteolytically cleaving other proteins, such as the precursors of the inflammatory cytokines interleukin-1 beta (IL1B) and interleukin 18 (IL18) as well as the pyroptosis inducer Gasdermin-D (GSDMD), into active mature peptides. Plays a key role in cell immunity as an inflammatory response initiator: once activated through formation of an inflammasome complex, it initiates a pro-inflammatory response through the cleavage of the two inflammatory cytokines IL1B and IL18, releasing the mature cytokines which are involved in a variety of inflammatory processes. Cleaves a tetrapeptide after an Asp residue at position P1. Also initiates pyroptosis, a programmed lytic cell death pathway, through cleavage of GSDMD. This Xenopus laevis (African clawed frog) protein is Caspase-1-B (casp1-b).